A 55-amino-acid polypeptide reads, in one-letter code: MNLAIQILASYPPSGKEKGYEAQPSGGVSAHYLHYDSDIHTPDPTNALRTAVPGR.

Functionally, overlapping regulatory peptide whose translation enables hokB expression. This chain is Regulatory protein MokB (mokB), found in Escherichia coli (strain K12).